We begin with the raw amino-acid sequence, 237 residues long: Ribosomal RNA small subunit methyltransferase G (237 aa).

S-adenosyl-L-methionine is bound by residues G78, F83, 129 to 130 (AE), and R148.

The protein belongs to the methyltransferase superfamily. RNA methyltransferase RsmG family.

The protein localises to the cytoplasm. In terms of biological role, specifically methylates the N7 position of a guanine in 16S rRNA. The protein is Ribosomal RNA small subunit methyltransferase G of Streptococcus equi subsp. zooepidemicus (strain H70).